A 454-amino-acid chain; its full sequence is Aquaglyceroporin-9 (454 aa).

At 1–186 the chain is on the cytoplasmic side; the sequence is MEGGLRSPLN…RHTMREPFSE (186 aa). The chain crosses the membrane as a helical span at residues 187–207; it reads FFGVFILILFGDGVVAQVVLS. Topologically, residues 208–216 are extracellular; that stretch reads SGERGSYQS. Residues 217 to 237 form a helical membrane-spanning segment; sequence ISWGWGIGVMLGVYASGVSGA. At 238–257 the chain is on the cytoplasmic side; the sequence is HINPAVTFANCIFRKFPWRK. The NPA 1 signature appears at 240–242; sequence NPA. The helical transmembrane segment at 258–278 threads the bilayer; it reads FPIYMLAQVLGAMCASGVVYA. Residues 279 to 316 lie on the Extracellular side of the membrane; the sequence is NYKSAIDMFEGGNNIRTVGLNTSSAGIFCTYPAPFMTK. N299 carries an N-linked (GlcNAc...) asparagine glycan. The helical transmembrane segment at 317 to 337 threads the bilayer; the sequence is TGQFFSEFVASTILMFCIYAL. The Cytoplasmic portion of the chain corresponds to 338 to 351; it reads QDNGNLGSGNLTPL. A helical transmembrane segment spans residues 352–372; it reads GLFFVIFGIGACFGWETGYAI. The short motif at 373 to 375 is the NPA 2 element; sequence NLA. The Extracellular portion of the chain corresponds to 373–403; sequence NLARDFGPRLMSYFLGYGHEVWSAGNYYFWV. A helical membrane pass occupies residues 404–424; the sequence is PMVAPFIGCLFGGWLYDVFIF. The Cytoplasmic segment spans residues 425–454; it reads TGESPINTPWMGLKRLMPGGLGSKKVDSKV.

Belongs to the MIP/aquaporin (TC 1.A.8) family.

It localises to the membrane. The enzyme catalyses H2O(in) = H2O(out). The catalysed reaction is glycerol(in) = glycerol(out). In terms of biological role, water channel required to facilitate the transport of water across membranes. May play a role in the vegetative growth and pathogenicity. The polypeptide is Aquaglyceroporin-9 (Botryotinia fuckeliana (strain B05.10) (Noble rot fungus)).